The chain runs to 253 residues: Eukaryotic initiation factor 4A-6 (253 aa).

Residues 1–82 (HVVVGTPGRV…RKFMNKPVRI (82 aa)) enclose the Helicase ATP-binding domain. A DEAD box motif is present at residues 30 to 33 (DEAD). A Helicase C-terminal domain is found at 93–253 (GIKQFYVNVD…EELPANVADL (161 aa)).

Belongs to the DEAD box helicase family. eIF4A subfamily. EIF4F is a multi-subunit complex, the composition of which varies with external and internal environmental conditions. It is composed of at least EIF4A, EIF4E and EIF4G.

The enzyme catalyses ATP + H2O = ADP + phosphate + H(+). Functionally, ATP-dependent RNA helicase which is a subunit of the eIF4F complex involved in cap recognition and is required for mRNA binding to ribosome. In the current model of translation initiation, eIF4A unwinds RNA secondary structures in the 5'-UTR of mRNAs which is necessary to allow efficient binding of the small ribosomal subunit, and subsequent scanning for the initiator codon. In Nicotiana tabacum (Common tobacco), this protein is Eukaryotic initiation factor 4A-6.